We begin with the raw amino-acid sequence, 69 residues long: Putative membrane protein insertion efficiency factor (69 aa).

This sequence belongs to the UPF0161 family.

The protein localises to the cell inner membrane. Functionally, could be involved in insertion of integral membrane proteins into the membrane. This Geobacter metallireducens (strain ATCC 53774 / DSM 7210 / GS-15) protein is Putative membrane protein insertion efficiency factor.